Here is a 469-residue protein sequence, read N- to C-terminus: 3-isopropylmalate dehydratase large subunit (469 aa).

[4Fe-4S] cluster is bound by residues Cys-347, Cys-410, and Cys-413.

This sequence belongs to the aconitase/IPM isomerase family. LeuC type 1 subfamily. Heterodimer of LeuC and LeuD. It depends on [4Fe-4S] cluster as a cofactor.

The enzyme catalyses (2R,3S)-3-isopropylmalate = (2S)-2-isopropylmalate. It participates in amino-acid biosynthesis; L-leucine biosynthesis; L-leucine from 3-methyl-2-oxobutanoate: step 2/4. Catalyzes the isomerization between 2-isopropylmalate and 3-isopropylmalate, via the formation of 2-isopropylmaleate. The sequence is that of 3-isopropylmalate dehydratase large subunit from Burkholderia orbicola (strain MC0-3).